A 303-amino-acid chain; its full sequence is Recombination-associated protein RdgC (303 aa).

Belongs to the RdgC family.

The protein localises to the cytoplasm. Its subcellular location is the nucleoid. Its function is as follows. May be involved in recombination. This is Recombination-associated protein RdgC from Yersinia enterocolitica serotype O:8 / biotype 1B (strain NCTC 13174 / 8081).